A 1225-amino-acid chain; its full sequence is ABC transporter B family member 18 (1225 aa).

Helical transmembrane passes span 23–43 (MALG…IFFI), 70–90 (VALV…GYCW), 146–168 (LPNF…LLLW), 172–194 (IVGF…ALIR), 252–272 (GIAI…TWYG), and 284–304 (GTVS…GQSL). Residues 23–312 (MALGLIGAVG…SLSNLKYFSE (290 aa)) enclose the ABC transmembrane type-1 1 domain. Positions 347-583 (VEFNHVKFTY…LDGQYTSLVR (237 aa)) constitute an ABC transporter 1 domain. 382-389 (GGSGSGKS) serves as a coordination point for ATP. N530 carries N-linked (GlcNAc...) asparagine glycosylation. A run of 2 helical transmembrane segments spans residues 657–677 (ALYG…YSYS) and 699–719 (IYVL…ISQH). The ABC transmembrane type-1 2 domain occupies 657–945 (ALYGCLGAAL…AGTMTKDLVK (289 aa)). A glycan (N-linked (GlcNAc...) asparagine) is linked at N754. Transmembrane regions (helical) follow at residues 780–800 (LLVQ…VISW), 804–824 (IVMM…RVLL), 880–900 (SWLA…VSAL), and 919–939 (FLEI…AGTM). Residues N960 and N1000 are each glycosylated (N-linked (GlcNAc...) asparagine). An ABC transporter 2 domain is found at 980–1218 (ISFSNVDFAY…GPKGAYFSLV (239 aa)). ATP is bound at residue 1015-1022 (GPSGSGKS). N-linked (GlcNAc...) asparagine glycosylation occurs at N1201.

This sequence belongs to the ABC transporter superfamily. ABCB family. Multidrug resistance exporter (TC 3.A.1.201) subfamily.

It localises to the membrane. The chain is ABC transporter B family member 18 (ABCB18) from Arabidopsis thaliana (Mouse-ear cress).